Consider the following 121-residue polypeptide: MNEEVSRPTRVALEIRKTLMEILHRDTKDPRLEKVNITECKISKDLSIATVYFTIIGVNEKDQPAQDAIKALEKAKGFFRSEIGKRMNLRITPEVRFFYDTVAENASHIEELIFKALHQKK.

Belongs to the RbfA family. In terms of assembly, monomer. Binds 30S ribosomal subunits, but not 50S ribosomal subunits or 70S ribosomes.

It localises to the cytoplasm. Functionally, one of several proteins that assist in the late maturation steps of the functional core of the 30S ribosomal subunit. Associates with free 30S ribosomal subunits (but not with 30S subunits that are part of 70S ribosomes or polysomes). Required for efficient processing of 16S rRNA. May interact with the 5'-terminal helix region of 16S rRNA. This is Ribosome-binding factor A from Hydrogenovibrio crunogenus (strain DSM 25203 / XCL-2) (Thiomicrospira crunogena).